A 126-amino-acid chain; its full sequence is MRRSTEFGVKTAGGSMTTIFERIIEGAVECDKVFEDENFIVIKDKFPQAPVHLLIIPKKHIEKLQDMQSDDFSLLSEAGKIIQLMARDFGIENGYRVVINNGLEGGQSVFHLHIHLLGGGLLGSIA.

The region spanning 19-126 (IFERIIEGAV…LGGGLLGSIA (108 aa)) is the HIT domain. The Histidine triad motif motif lies at 111–115 (HLHIH).

This is an uncharacterized protein from Chlamydia muridarum (strain MoPn / Nigg).